Reading from the N-terminus, the 319-residue chain is Dimethyladenosine transferase (319 aa).

6 residues coordinate S-adenosyl-L-methionine: H37, L39, G64, E85, D113, and N128.

It belongs to the class I-like SAM-binding methyltransferase superfamily. rRNA adenine N(6)-methyltransferase family.

It carries out the reaction adenosine(1779)/adenosine(1780) in 18S rRNA + 4 S-adenosyl-L-methionine = N(6)-dimethyladenosine(1779)/N(6)-dimethyladenosine(1780) in 18S rRNA + 4 S-adenosyl-L-homocysteine + 4 H(+). Functionally, specifically dimethylates two adjacent adenosines in the loop of a conserved hairpin near the 3'-end of 18S rRNA in the 40S particle. In Eremothecium gossypii (strain ATCC 10895 / CBS 109.51 / FGSC 9923 / NRRL Y-1056) (Yeast), this protein is Dimethyladenosine transferase (DIM1).